The chain runs to 446 residues: Low-affinity gluconate transporter (446 aa).

Residue Met1 is a topological domain, cytoplasmic. A helical membrane pass occupies residues 2 to 22; sequence TTLTLVLTAVGSVLLLLFLVM. Topologically, residues 23–26 are periplasmic; the sequence is KARM. The helical transmembrane segment at 27-47 threads the bilayer; the sequence is HAFLALMVVSMGAGLFSGMPL. Over 48–58 the chain is Cytoplasmic; it reads DKIAATMEKGM. Residues 59–79 form a helical membrane-spanning segment; the sequence is GGTLGFLAVVVALGAMFGKIL. Residues 80-109 are Periplasmic-facing; the sequence is HETGAVDQIAVKMLKSFGHSRAHYAIGLAG. Residues 110–130 traverse the membrane as a helical segment; sequence LVCALPLFFEVAIVLLISVAF. The Cytoplasmic portion of the chain corresponds to 131–142; it reads SMARHTGTNLVK. The chain crosses the membrane as a helical span at residues 143–163; that stretch reads LVIPLFAGVAAAAAFLVPGPA. Residues 164 to 176 are Periplasmic-facing; the sequence is PMLLASQMNADFG. A helical transmembrane segment spans residues 177–197; sequence WMILIGLCAAIPGMIIAGPLW. Topologically, residues 198–225 are cytoplasmic; that stretch reads GNFISRYVELHIPDDISEPHLGEGKMPS. Residues 226–246 form a helical membrane-spanning segment; it reads FGFSLSLILLPLVLVGLKTIA. The Periplasmic segment spans residues 247 to 261; the sequence is ARFVPEGSTAYEWFE. Residues 262–282 traverse the membrane as a helical segment; it reads FIGHPFTAILVACLVAIYGLA. The Cytoplasmic portion of the chain corresponds to 283-294; sequence MRQGMPKDKVME. A helical membrane pass occupies residues 295-315; sequence ICGHALQPAGIILLVIGAGGV. Topologically, residues 316 to 330 are periplasmic; it reads FKQVLVDSGVGPALG. A helical membrane pass occupies residues 331 to 351; that stretch reads EALTGMGLPIAITCFVLAAAV. A topological domain (cytoplasmic) is located at residue Arg352. A helical transmembrane segment spans residues 353 to 373; sequence IIQGSATVACLTAVGLVMPVI. The Periplasmic segment spans residues 374–387; that stretch reads EQLNYSGAQMAALS. The chain crosses the membrane as a helical span at residues 388–408; the sequence is ICIAGGSIVVSHVNDAGFWLF. Over 409–424 the chain is Cytoplasmic; it reads GKFTGATEAETLKTWT. A helical membrane pass occupies residues 425-445; that stretch reads MMETILGTVGAIVGMIAFQLL. Residue Ser446 is a topological domain, periplasmic.

It belongs to the GntP permease family.

The protein localises to the cell inner membrane. Part of the gluconate utilization system Gnt-I; low-affinity intake of gluconate. The protein is Low-affinity gluconate transporter (gntU) of Escherichia coli O157:H7.